The following is a 200-amino-acid chain: GTP cyclohydrolase-2 (200 aa).

A GTP-binding site is contributed by 49–53 (RVHSE). Cys-54, Cys-65, and Cys-67 together coordinate Zn(2+). GTP is bound by residues Gln-70, 92 to 94 (EGR), and Thr-114. Catalysis depends on Asp-126, which acts as the Proton acceptor. The active-site Nucleophile is the Arg-128. Thr-149 and Lys-154 together coordinate GTP.

This sequence belongs to the GTP cyclohydrolase II family. In terms of assembly, homodimer. The cofactor is Zn(2+).

The enzyme catalyses GTP + 4 H2O = 2,5-diamino-6-hydroxy-4-(5-phosphoribosylamino)-pyrimidine + formate + 2 phosphate + 3 H(+). Its pathway is cofactor biosynthesis; riboflavin biosynthesis; 5-amino-6-(D-ribitylamino)uracil from GTP: step 1/4. Functionally, catalyzes the conversion of GTP to 2,5-diamino-6-ribosylamino-4(3H)-pyrimidinone 5'-phosphate (DARP), formate and pyrophosphate. The polypeptide is GTP cyclohydrolase-2 (Klebsiella pneumoniae (strain 342)).